The chain runs to 189 residues: Mercury resistance operon ORF3 (189 aa).

The tat-type signal signal peptide spans 1–27 (MTSPSPTARRTRLRRRTALALAAAATA). One can recognise a Thioredoxin domain in the interval 38–189 (TKANTPATRA…IQDALKKAGA (152 aa)).

Predicted to be exported by the Tat system. The position of the signal peptide cleavage has not been experimentally proven.

The protein resides in the secreted. Functionally, probable mercury binding protein. The protein is Mercury resistance operon ORF3 of Streptomyces lividans.